Here is a 246-residue protein sequence, read N- to C-terminus: Mast cell protease 1 (246 aa).

An N-terminal signal peptide occupies residues 1–18 (MQALLFLLALLWPPEAGA). Positions 19 to 20 (EE) are cleaved as a propeptide — activation peptide. Residues 21–244 (IIGGVESKPH…YVPWINLVIR (224 aa)) enclose the Peptidase S1 domain. The cysteines at positions 50 and 66 are disulfide-linked. Catalysis depends on charge relay system residues His65 and Asp109. Cystine bridges form between Cys143–Cys208 and Cys174–Cys187. Catalysis depends on Ser202, which acts as the Charge relay system.

Belongs to the peptidase S1 family. Granzyme subfamily.

This is Mast cell protease 1 from Meriones unguiculatus (Mongolian jird).